The primary structure comprises 272 residues: MTRQWEILREYDEIKYEFFEGIAKVTINRPEVRNAFTPKTVAEMIDAFSRARDDQNVSVIVLTGEGDKAFCSGGDQKKRGHGGYVGEDDIPRLNVLDLQRLIRVIPKPVIAMVRGYAIGGGNVLNVVCDLTIAADNAIFGQTGPKVGSFDAGYGSGYLARIVGHKKAREIWYLCRQYNAQEALDMGLVNTVVPLEQVEDETVKWCKDIMQHSPTALRFLKAAMNADTDGLAGLQQMAGDATLLYYTTDEAKEGRDAFKEKRNPDFDQFPKFP.

Substrate contacts are provided by residues Arg-33, Ser-72 to Gln-76, Tyr-84, Tyr-116 to Gly-120, Thr-142, Ser-148, Tyr-245, and Lys-260. Gln-141 to Gly-143 is a hydrogencarbonate binding site.

Belongs to the enoyl-CoA hydratase/isomerase family. MenB subfamily. Hydrogencarbonate serves as cofactor.

The enzyme catalyses 2-succinylbenzoyl-CoA + H(+) = 1,4-dihydroxy-2-naphthoyl-CoA + H2O. It functions in the pathway quinol/quinone metabolism; 1,4-dihydroxy-2-naphthoate biosynthesis; 1,4-dihydroxy-2-naphthoate from chorismate: step 6/7. The protein operates within quinol/quinone metabolism; menaquinone biosynthesis. In terms of biological role, converts o-succinylbenzoyl-CoA (OSB-CoA) to 1,4-dihydroxy-2-naphthoyl-CoA (DHNA-CoA). This is 1,4-dihydroxy-2-naphthoyl-CoA synthase from Staphylococcus epidermidis (strain ATCC 12228 / FDA PCI 1200).